Reading from the N-terminus, the 141-residue chain is Nucleoside diphosphate kinase (141 aa).

Residues K11, F59, R87, T93, R104, and N114 each contribute to the ATP site. Residue H117 is the Pros-phosphohistidine intermediate of the active site.

This sequence belongs to the NDK family. In terms of assembly, homotetramer. The cofactor is Mg(2+).

The protein localises to the cytoplasm. The catalysed reaction is a 2'-deoxyribonucleoside 5'-diphosphate + ATP = a 2'-deoxyribonucleoside 5'-triphosphate + ADP. It catalyses the reaction a ribonucleoside 5'-diphosphate + ATP = a ribonucleoside 5'-triphosphate + ADP. Major role in the synthesis of nucleoside triphosphates other than ATP. The ATP gamma phosphate is transferred to the NDP beta phosphate via a ping-pong mechanism, using a phosphorylated active-site intermediate. This chain is Nucleoside diphosphate kinase, found in Paraburkholderia xenovorans (strain LB400).